A 213-amino-acid chain; its full sequence is ER lumen protein-retaining receptor erd-2.1 (213 aa).

The Lumenal portion of the chain corresponds to 1-2 (MN). A helical membrane pass occupies residues 3–21 (LFRFTADVAHAIAIVVLLL). The Cytoplasmic portion of the chain corresponds to 22 to 35 (KIWKSRSCEGISGR). Residues 36-53 (SQLLFALVFVTRYLDLFT) traverse the membrane as a helical segment. Residues 54 to 61 (NFFSFYNT) lie on the Lumenal side of the membrane. The chain crosses the membrane as a helical span at residues 62–80 (AMKIFYLVASFGTVYLMWA). Residues 81-96 (KFKATYDRNNDSFRIE) lie on the Cytoplasmic side of the membrane. A helical membrane pass occupies residues 97–110 (FLVIPSMILALLIN). Topologically, residues 111-117 (HEFIFME) are lumenal. A helical transmembrane segment spans residues 118 to 137 (VMWTFSIYLEAVAIMPQLFM). At 138-149 (LSRTGNAETITA) the chain is on the cytoplasmic side. A helical transmembrane segment spans residues 150–168 (HYLFALGSYRFLYILNWVY). Residues 169-178 (RYYTESFFDP) are Lumenal-facing. The helical transmembrane segment at 179 to 199 (ISVVAGIVQTVLYADFFYLYI) threads the bilayer. Topologically, residues 200–213 (TRVIQSNRQFEMSA) are cytoplasmic.

It belongs to the ERD2 family.

It is found in the endoplasmic reticulum membrane. Its function is as follows. Required for the retention of luminal endoplasmic reticulum proteins. Determines the specificity of the luminal ER protein retention system. Also required for normal vesicular traffic through the Golgi. This Caenorhabditis elegans protein is ER lumen protein-retaining receptor erd-2.1.